A 103-amino-acid polypeptide reads, in one-letter code: Pyrimidine/purine nucleoside phosphorylase (103 aa).

It belongs to the nucleoside phosphorylase PpnP family.

The enzyme catalyses a purine D-ribonucleoside + phosphate = a purine nucleobase + alpha-D-ribose 1-phosphate. It catalyses the reaction adenosine + phosphate = alpha-D-ribose 1-phosphate + adenine. It carries out the reaction cytidine + phosphate = cytosine + alpha-D-ribose 1-phosphate. The catalysed reaction is guanosine + phosphate = alpha-D-ribose 1-phosphate + guanine. The enzyme catalyses inosine + phosphate = alpha-D-ribose 1-phosphate + hypoxanthine. It catalyses the reaction thymidine + phosphate = 2-deoxy-alpha-D-ribose 1-phosphate + thymine. It carries out the reaction uridine + phosphate = alpha-D-ribose 1-phosphate + uracil. The catalysed reaction is xanthosine + phosphate = alpha-D-ribose 1-phosphate + xanthine. Its function is as follows. Catalyzes the phosphorolysis of diverse nucleosides, yielding D-ribose 1-phosphate and the respective free bases. Can use uridine, adenosine, guanosine, cytidine, thymidine, inosine and xanthosine as substrates. Also catalyzes the reverse reactions. The polypeptide is Pyrimidine/purine nucleoside phosphorylase (Citrifermentans bemidjiense (strain ATCC BAA-1014 / DSM 16622 / JCM 12645 / Bem) (Geobacter bemidjiensis)).